Reading from the N-terminus, the 851-residue chain is DNA mismatch repair protein MutS (851 aa).

614–621 (GPNMGGKS) is an ATP binding site.

The protein belongs to the DNA mismatch repair MutS family.

Its function is as follows. This protein is involved in the repair of mismatches in DNA. It is possible that it carries out the mismatch recognition step. This protein has a weak ATPase activity. The polypeptide is DNA mismatch repair protein MutS (Photorhabdus laumondii subsp. laumondii (strain DSM 15139 / CIP 105565 / TT01) (Photorhabdus luminescens subsp. laumondii)).